A 380-amino-acid polypeptide reads, in one-letter code: Alcohol dehydrogenase-like 4 (380 aa).

8 residues coordinate Zn(2+): C47, T49, H70, C100, C103, C106, C114, and C180. An alcohol-binding residues include T49 and H70. Residue T49 participates in NAD(+) binding. NAD(+)-binding positions include 205 to 210 (GLGAVG), D229, K234, 298 to 300 (LGV), F325, and R375.

It belongs to the zinc-containing alcohol dehydrogenase family. Class-III subfamily. As to quaternary structure, homodimer. Zn(2+) is required as a cofactor.

The protein localises to the cytoplasm. The catalysed reaction is a primary alcohol + NAD(+) = an aldehyde + NADH + H(+). The enzyme catalyses a secondary alcohol + NAD(+) = a ketone + NADH + H(+). This is Alcohol dehydrogenase-like 4 from Arabidopsis thaliana (Mouse-ear cress).